Consider the following 318-residue polypeptide: Ankyrin repeat and SOCS box protein 7 (318 aa).

7 ANK repeats span residues 13–42 (QEES…SPNG), 46–75 (NGWT…DPTV), 80–109 (GGFT…RSDI), 116–145 (DGWT…EVDP), 149–178 (KGTT…NIDI), 180–208 (NGFL…DTNL), and 213–242 (DGQT…DTNT). Residues 265–318 (LDFLQEVTRQPRNLQDLCRIKIRQCIGLQNLKLLDELPIAKVMKDYLKHKSDDI) enclose the SOCS box domain.

This sequence belongs to the ankyrin SOCS box (ASB) family. As to quaternary structure, interacts with CUL5. Interacts with RNF7. Interacts with PSRC1.

It functions in the pathway protein modification; protein ubiquitination. Its function is as follows. Probable substrate-recognition component of a SCF-like ECS (Elongin-Cullin-SOCS-box protein) E3 ubiquitin-protein ligase complex which mediates the ubiquitination and subsequent proteasomal degradation of target proteins. Plays a role in spindle dynamics and genome integrity by targeting the mitotic progression protein PSRC1 for proteasomal degradation in a cell cycle-dependent manner. Also participates in meiosis by mediating the proper attachment between kinetochores and microtubules. The sequence is that of Ankyrin repeat and SOCS box protein 7 (ASB7) from Pongo abelii (Sumatran orangutan).